The following is a 222-amino-acid chain: RING finger protein 141 (222 aa).

The RING-type zinc finger occupies 147-184; that stretch reads CCICMDGKADLILPCAHSFCQKCIDKWSGQSRNCPVCR.

This is RING finger protein 141 (rnf141) from Danio rerio (Zebrafish).